We begin with the raw amino-acid sequence, 24 residues long: 33.0 kDa cold shock protein (24 aa).

The protein belongs to the thaumatin family. As to quaternary structure, homooligomer; disulfide-linked. In terms of processing, glycosylated.

It is found in the secreted. It localises to the extracellular space. Its subcellular location is the apoplast. The chain is 33.0 kDa cold shock protein from Arachis hypogaea (Peanut).